We begin with the raw amino-acid sequence, 715 residues long: Metastasis-associated protein MTA1 (715 aa).

The BAH domain occupies 1–164 (MAANMYRVGD…PQQKTLLADK (164 aa)). The ELM2 domain occupies 165–276 (GEIRVGNRYQ…KAISALVPQG (112 aa)). Lys182 participates in a covalent cross-link: Glycyl lysine isopeptide (Lys-Gly) (interchain with G-Cter in ubiquitin). Residues 283–335 (DEMEEWSASEANLFEEALEKYGKDFTDIQQDFLPWKSLTSIIEYYYMWKTTDR) enclose the SANT domain. Ser386 carries the post-translational modification Phosphoserine. The GATA-type; atypical zinc finger occupies 393-420 (CESCYTTQSYQWYSWGPPNMQCRLCASC). The tract at residues 435-460 (RLDGERPGPNRSNMSPHGLPARSSGS) is disordered. Phosphoserine occurs at positions 446 and 449. Lys509 is covalently cross-linked (Glycyl lysine isopeptide (Lys-Gly) (interchain with G-Cter in SUMO2 and SUMO3)). Residue Ser522 is modified to Phosphoserine. The short motif at 545 to 552 (PRPPKPDP) is the SH3-binding element. Residue Lys549 forms a Glycyl lysine isopeptide (Lys-Gly) (interchain with G-Cter in SUMO2) linkage. Residue Thr564 is modified to Phosphothreonine. At Ser576 the chain carries Phosphoserine. Thr578 carries the post-translational modification Phosphothreonine. Lys626 is modified (N6-acetyllysine; alternate). Residue Lys626 forms a Glycyl lysine isopeptide (Lys-Gly) (interchain with G-Cter in ubiquitin); alternate linkage. A Phosphoserine modification is found at Ser639. The interval 656 to 686 (DVFYMATEETRKIRKLLSSSETKRAARRPYK) is interaction with RBBP4. A disordered region spans residues 673–715 (SSSETKRAARRPYKPIALRQSQALPPRPPPPAPVNDEPIVIED). Residues 696-705 (LPPRPPPPAP) carry the SH3-binding motif. Residues 711-715 (IVIED) carry the SUMO interaction motif 1 (SIM); crucial for efficient sumoylation motif.

The protein belongs to the metastasis-associated protein family. As to quaternary structure, component of the nucleosome remodeling and deacetylase (NuRD) repressor complex, composed of core proteins MTA1, MTA2, MTA3, RBBP4, RBBP7, HDAC1, HDAC2, MBD2, MBD3, and peripherally associated proteins CDK2AP1, CDK2AP2, GATAD2A, GATAD2B, CHD3, CHD4 and CHD5. The exact stoichiometry of the NuRD complex is unknown, and some subunits such as MBD2 and MBD3, GATAD2A and GATAD2B, and CHD3, CHD4 and CHD5 define mutually exclusive NuRD complexes. Interacts with RBBP4; the interaction is direct. Interacts with BMAL1. Interacts with CLOCK. Interacts with COP1. Interacts with CSNK1G2 in the cytoplasm. Interacts with EP300. Interacts with HDAC2. Interacts with IFI16. Interacts with ITGB3BP/CENPR. Interacts with MBD3L2. Interacts with MDM2. Interacts with NACC2. Interacts with p53/TP53. Interacts with PIAS1. Interacts with PIAS3. Interacts with PIAS4. Interacts with PWWP2A. Interacts with PWWP2B. Interacts with SENP1. Interacts with SENP2. Interacts with SIX3; facilitates the binding of SIX3 to the core DNA motif of SIX3 promoter. Interacts with SUMO1. Interacts with SUMO2. Interacts with TFCP2L1; which is indispensable for TFCP2L1-mediated self-renewal-promoting effect and endoderm-inhibiting action. Interacts with TFAP2C. Interacts with TPR. Interacts with UBE2I/UBC9. Phosphorylation by CSNK1G2/CK1 triggered by estrogen enhances corepression of estrogen receptor (ER). In terms of processing, acetylation is essential for its transcriptional coactivator activity. Post-translationally, sumoylation positively regulates its transcriptional corepressor activity but does not affect the protein stability. Sumoylated preferentially by SUMO2 or SUMO3 than SUMO1. Sumoylation is enhanced by PIAS1/3/4 and preferentially sumoylated by SUMO2 in the presence of PIAS1/3/4. Desumoylated by SENP1. Ubiquitinated by COP1, which leads to proteasomal degradation. As to expression, widely expressed. High expression in brain, liver, kidney, and cardiac muscle, ovaries, adrenal glands and virgin mammary glands. Higher in tumors than in adjacent normal tissue from the same individual. Up-regulated in a wide variety of cancers including breast, liver, ovarian, and colorectal cancer and its expression levels are closely correlated with tumor aggressiveness and metastasis.

Its subcellular location is the nucleus. The protein resides in the cytoplasm. The protein localises to the nucleus envelope. It localises to the cytoskeleton. Its function is as follows. Transcriptional coregulator which can act as both a transcriptional corepressor and coactivator. Acts as a component of the histone deacetylase NuRD complex which participates in the remodeling of chromatin. In the NuRD complex, regulates transcription of its targets by modifying the acetylation status of the target chromatin and cofactor accessibility to the target DNA. In conjunction with other components of NuRD, acts as a transcriptional corepressor of BRCA1, ESR1, TFF1 and CDKN1A. Acts as a transcriptional coactivator of BCAS3, and SUMO2, independent of the NuRD complex. Stimulates the expression of WNT1 by inhibiting the expression of its transcriptional corepressor SIX3. Regulates p53-dependent and -independent DNA repair processes following genotoxic stress. Regulates the stability and function of p53/TP53 by inhibiting its ubiquitination by COP1 and MDM2 thereby regulating the p53-dependent DNA repair. Plays a role in the regulation of the circadian clock and is essential for the generation and maintenance of circadian rhythms under constant light and for normal entrainment of behavior to light-dark (LD) cycles. Positively regulates the CLOCK-BMAL1 heterodimer mediated transcriptional activation of its own transcription and the transcription of CRY1. Regulates deacetylation of BMAL1 by regulating SIRT1 expression, resulting in derepressing CRY1-mediated transcription repression. With TFCP2L1, promotes establishment and maintenance of pluripotency in embryonic stem cells (ESCs) and inhibits endoderm differentiation. Binds to ESR1 and sequesters it in the cytoplasm and enhances its non-genomic responses. The chain is Metastasis-associated protein MTA1 (MTA1) from Homo sapiens (Human).